We begin with the raw amino-acid sequence, 181 residues long: GTPase RhebL1 (181 aa).

Residues 30-36 (LEDYDPT), Gly61, 117-120 (NKAD), and 147-148 (SA) contribute to the GTP site. The short motif at 33 to 41 (YDPTVENTY) is the Effector region element. A Mg(2+)-binding site is contributed by Thr36. A Cysteine methyl ester modification is found at Cys178. The S-farnesyl cysteine moiety is linked to residue Cys178. Positions 179–181 (HLM) are cleaved as a propeptide — removed in mature form.

It belongs to the small GTPase superfamily. Rheb family. In terms of assembly, interacts with MTOR.

It is found in the endomembrane system. The protein resides in the cytoplasm. The catalysed reaction is GTP + H2O = GDP + phosphate + H(+). Its function is as follows. Binds GTP and exhibits intrinsic GTPase activity. May activate NF-kappa-B-mediated gene transcription. Promotes signal transduction through MTOR, activates RPS6KB1, and is a downstream target of the small GTPase-activating proteins TSC1 and TSC2. This chain is GTPase RhebL1 (RHEBL1), found in Bos taurus (Bovine).